The following is a 277-amino-acid chain: Shikimate dehydrogenase (NADP(+)) (277 aa).

Residues 15 to 17 (SLS) and Thr-62 each bind shikimate. Catalysis depends on Lys-66, which acts as the Proton acceptor. Residues Asn-87 and Asp-102 each coordinate shikimate. Residues 127–131 (GAGGA), 151–156 (NRTVDK), and Ile-219 contribute to the NADP(+) site. Tyr-221 lines the shikimate pocket. Gly-242 is a binding site for NADP(+).

Belongs to the shikimate dehydrogenase family. In terms of assembly, homodimer.

It catalyses the reaction shikimate + NADP(+) = 3-dehydroshikimate + NADPH + H(+). The protein operates within metabolic intermediate biosynthesis; chorismate biosynthesis; chorismate from D-erythrose 4-phosphate and phosphoenolpyruvate: step 4/7. Functionally, involved in the biosynthesis of the chorismate, which leads to the biosynthesis of aromatic amino acids. Catalyzes the reversible NADPH linked reduction of 3-dehydroshikimate (DHSA) to yield shikimate (SA). The sequence is that of Shikimate dehydrogenase (NADP(+)) from Bacillus cereus (strain 03BB102).